The chain runs to 204 residues: Holliday junction branch migration complex subunit RuvA (204 aa).

Residues 1–67 (MIGYLEGKIL…QPKPVLIGFN (67 aa)) are domain I. The interval 68 to 145 (SLEEREFFER…VFAGEHGGEP (78 aa)) is domain II. Residues 146-156 (AGPAPVEENFH) form a flexible linker region. The segment at 156–204 (HLLVLDVLVNQLGHKAAEAKELINQAIKRNPAISSPEELFDEVYRGETG) is domain III.

This sequence belongs to the RuvA family. As to quaternary structure, homotetramer. Forms an RuvA(8)-RuvB(12)-Holliday junction (HJ) complex. HJ DNA is sandwiched between 2 RuvA tetramers; dsDNA enters through RuvA and exits via RuvB. An RuvB hexamer assembles on each DNA strand where it exits the tetramer. Each RuvB hexamer is contacted by two RuvA subunits (via domain III) on 2 adjacent RuvB subunits; this complex drives branch migration. In the full resolvosome a probable DNA-RuvA(4)-RuvB(12)-RuvC(2) complex forms which resolves the HJ.

It localises to the cytoplasm. The RuvA-RuvB-RuvC complex processes Holliday junction (HJ) DNA during genetic recombination and DNA repair, while the RuvA-RuvB complex plays an important role in the rescue of blocked DNA replication forks via replication fork reversal (RFR). RuvA specifically binds to HJ cruciform DNA, conferring on it an open structure. The RuvB hexamer acts as an ATP-dependent pump, pulling dsDNA into and through the RuvAB complex. HJ branch migration allows RuvC to scan DNA until it finds its consensus sequence, where it cleaves and resolves the cruciform DNA. The chain is Holliday junction branch migration complex subunit RuvA from Desulfatibacillum aliphaticivorans.